Reading from the N-terminus, the 210-residue chain is Holliday junction branch migration complex subunit RuvA (210 aa).

Residues 1-70 (MISYLKGNPI…DEQPILYGFA (70 aa)) are domain I. Positions 71–149 (TAAERELFRQ…QWRKLVGITL (79 aa)) are domain II. A flexible linker region spans residues 150–160 (PSTSAIPSLEV). A domain III region spans residues 160–210 (VLEDVEMTLLALGYTNEEINKAISTLSQDNQMLKNTNSEEWIREAIAWLSQ).

Belongs to the RuvA family. In terms of assembly, homotetramer. Forms an RuvA(8)-RuvB(12)-Holliday junction (HJ) complex. HJ DNA is sandwiched between 2 RuvA tetramers; dsDNA enters through RuvA and exits via RuvB. An RuvB hexamer assembles on each DNA strand where it exits the tetramer. Each RuvB hexamer is contacted by two RuvA subunits (via domain III) on 2 adjacent RuvB subunits; this complex drives branch migration. In the full resolvosome a probable DNA-RuvA(4)-RuvB(12)-RuvC(2) complex forms which resolves the HJ.

It is found in the cytoplasm. In terms of biological role, the RuvA-RuvB-RuvC complex processes Holliday junction (HJ) DNA during genetic recombination and DNA repair, while the RuvA-RuvB complex plays an important role in the rescue of blocked DNA replication forks via replication fork reversal (RFR). RuvA specifically binds to HJ cruciform DNA, conferring on it an open structure. The RuvB hexamer acts as an ATP-dependent pump, pulling dsDNA into and through the RuvAB complex. HJ branch migration allows RuvC to scan DNA until it finds its consensus sequence, where it cleaves and resolves the cruciform DNA. In Rippkaea orientalis (strain PCC 8801 / RF-1) (Cyanothece sp. (strain PCC 8801)), this protein is Holliday junction branch migration complex subunit RuvA.